Reading from the N-terminus, the 588-residue chain is Glutathione/L-cysteine transport system ATP-binding/permease protein CydD (588 aa).

At 1–15 (MNKSRQKELTRWLKQ) the chain is on the cytoplasmic side. A run of 2 helical transmembrane segments spans residues 16-36 (QSVI…VSGI) and 37-57 (LIIA…MENI). The ABC transmembrane type-1 domain occupies 20–306 (SQRWLNISRL…APEFFQPLRD (287 aa)). Residues 58–136 (PREALLLPFT…LEQIDDMHDY (79 aa)) are Cytoplasmic-facing. Residues 137 to 157 (YARYLPQMALAVSVPLLIVVA) traverse the membrane as a helical segment. Residues 158–161 (IFPS) lie on the Periplasmic side of the membrane. A helical transmembrane segment spans residues 162–182 (NWAAALILLGTAPLIPLFMAL). The Cytoplasmic portion of the chain corresponds to 183–249 (VGMGAADANR…MEVLRLAFLS (67 aa)). A helical membrane pass occupies residues 250–270 (SGILEFFTSLSIALVAVYFGF). Topologically, residues 271-276 (SYLGEL) are periplasmic. The helical transmembrane segment at 277-297 (DFGHYDTGVTLAAGFLALILA) threads the bilayer. The Cytoplasmic segment spans residues 298-573 (PEFFQPLRDL…QGRYAELSVA (276 aa)). The region spanning 339–572 (EAELASTDPV…EQGRYAELSV (234 aa)) is the ABC transporter domain. 373-380 (LPAGQRAV) lines the ATP pocket.

This sequence belongs to the ABC transporter superfamily. Cysteine exporter (TC 3.A.1.129.1) family. As to quaternary structure, forms a heterodimer with CydC.

The protein resides in the cell inner membrane. It catalyses the reaction L-cysteine(in) + ATP + H2O = L-cysteine(out) + ADP + phosphate + H(+). It carries out the reaction glutathione(in) + ATP + H2O = glutathione(out) + ADP + phosphate + H(+). ATPase activity is stimulated by various thiol compounds. The presence of heme leads to a further enhancement of thiol-stimulated ATPase activity, although a large excess of heme inhibits activity. Glutathione transport is inhibited by sodium orthovanadate, an inhibitor of ABC-type transport systems, but not by the proton ionophore carbonyl cyanide m-chlorophenylhydrazone (CCCP). In terms of biological role, part of the ABC transporter complex CydDC that exports the reduced low-molecular-weight thiols cysteine and glutathione to the periplasm. Export of these thiol-containing redox-active molecules may be crucial for redox homeostasis in the periplasm, permitting correct assembly of various respiratory complexes and formation of correct disulfide bonds in periplasmic and secreted proteins. CydD contains transmembrane domains (TMD), which form a pore in the inner membrane, and an ATP-binding domain (NBD), which is responsible for energy generation. Required for the assembly of functional cytochrome bd-type quinol oxidases and periplasmic c-type cytochromes. Overexpression of CydDC under anaerobic conditions also results in the formation of a heme biosynthesis-derived pigment, P-574. CydDC binds heme b, but heme is probably not transported by the complex and instead has a role in regulating ATPase activity. Conversely, a more recent study suggests an alternative function of CydDC: authors suggest that CydDC does not mediate the export of L-cysteine but rather reduces cytoplasmic L-cystine to L-cysteine. The principle function of CydDC would be to maintain the reduced state of cytoplasmic L-cysteine, thereby providing an important connection between sulfur metabolism, oxidative stress and resistance to antibiotics. This is Glutathione/L-cysteine transport system ATP-binding/permease protein CydD from Escherichia coli (strain K12).